The sequence spans 562 residues: T-complex protein 1 subunit epsilon (562 aa).

The protein belongs to the TCP-1 chaperonin family. In terms of assembly, heterooligomeric complex of about 850 to 900 kDa that forms two stacked rings, 12 to 16 nm in diameter.

The protein localises to the cytoplasm. Molecular chaperone; assists the folding of proteins upon ATP hydrolysis. Known to play a role, in vitro, in the folding of actin and tubulin. In yeast may play a role in mitotic spindle formation. The protein is T-complex protein 1 subunit epsilon (CCT5) of Saccharomyces cerevisiae (strain ATCC 204508 / S288c) (Baker's yeast).